The primary structure comprises 314 residues: Ketimine reductase mu-crystallin (314 aa).

R47 is a binding site for 3,3',5-triiodo-L-thyronine. Residues D82, H92, R119, A144, V146, Q147, N168, R169, T170, N173, T205, L206, V226, and A228 each contribute to the NADPH site. E257 provides a ligand contact to 3,3',5-triiodo-L-thyronine. S292 contributes to the NADPH binding site.

This sequence belongs to the ornithine cyclodeaminase/mu-crystallin family. In terms of assembly, homodimer. Binds the thyroid hormone triiodothyronine (T3); T3 binding inhibits enzymatic activity. As to expression, expressed in neural tissues, muscle and kidney. Expressed in the inner ear.

The protein localises to the cytoplasm. It catalyses the reaction L-pipecolate + NADP(+) = Delta(1)-piperideine-2-carboxylate + NADPH + H(+). It carries out the reaction L-pipecolate + NAD(+) = Delta(1)-piperideine-2-carboxylate + NADH + H(+). The enzyme catalyses L-proline + NADP(+) = 1-pyrroline-2-carboxylate + NADPH + H(+). The catalysed reaction is L-proline + NAD(+) = 1-pyrroline-2-carboxylate + NADH + H(+). It catalyses the reaction (3R)-1,4-thiomorpholine-3-carboxylate + NAD(+) = 3,4-dehydrothiomorpholine-3-carboxylate + NADH + 2 H(+). It carries out the reaction (3R)-1,4-thiomorpholine-3-carboxylate + NADP(+) = 3,4-dehydrothiomorpholine-3-carboxylate + NADPH + 2 H(+). The enzyme catalyses (S)-cystathionine ketimine + NADH + 2 H(+) = (3R,5S)-2,3,5,6,7-pentahydro-1,4-thiazepine-3,5-dicarboxylate + NAD(+). The catalysed reaction is (S)-cystathionine ketimine + NADPH + 2 H(+) = (3R,5S)-2,3,5,6,7-pentahydro-1,4-thiazepine-3,5-dicarboxylate + NADP(+). It catalyses the reaction (R)-lanthionine ketimine + NADPH + 2 H(+) = (3R,5R)-1,4-thiomorpholine-3,5-dicarboxylate + NADP(+). It carries out the reaction Delta(2)-thiazoline-2-carboxylate + NADPH + 2 H(+) = L-thiazolidine-2-carboxylate + NADP(+). Its activity is regulated as follows. Inhibited by thyroid hormones triiodothyronine (T3) and thyroxine (T4). Its function is as follows. Catalyzes the NAD(P)H-dependent reduction of imine double bonds of a number of cyclic ketimine substrates, including sulfur-containing cyclic ketimines. Under physiological conditions, it efficiently catalyzes delta(1)-piperideine-2-carboxylate (P2C) and delta(1)-pyrroline-2-carboxylate (Pyr2C) reduction, suggesting a central role in lysine and glutamate metabolism. Additional substrates are delta(2)-thiazoline-2-carboxylate (T2C), 3,4-dehydrothiomorpholine-3-carboxylate (AECK), and (R)-lanthionine ketimine (LK) that is reduced at very low rate compared to other substrates. Also catalyzes the NAD(P)H-dependent reduction of (S)-cystathionine ketimine (CysK). The sequence is that of Ketimine reductase mu-crystallin from Homo sapiens (Human).